A 498-amino-acid chain; its full sequence is Putative BTB/POZ domain-containing protein L67 (498 aa).

In terms of domain architecture, BTB spans 26–96 (SDINITLSDN…MYGISLSEIN (71 aa)).

This sequence belongs to the mimivirus BTB/WD family.

This Acanthamoeba polyphaga (Amoeba) protein is Putative BTB/POZ domain-containing protein L67.